We begin with the raw amino-acid sequence, 531 residues long: Unconventional prefoldin RPB5 interactor (531 aa).

Methionine 1 is subject to N-acetylmethionine. Disordered stretches follow at residues 1 to 24, 224 to 381, 408 to 470, and 500 to 531; these read MEPPSEPEPEPQPLAEASAAAPLR, ELES…ELPA, KSRS…SGVS, and TIPERKEVPSEVSEEPTKRVSKFRAARLQQRS. Positions 13 to 24 are enriched in low complexity; sequence PLAEASAAAPLR. Polar residues-rich tracts occupy residues 257-266 and 280-296; these read SPVTDSSAAS and GQVNSLNYSVNGSNSYH. The segment covering 300–319 has biased composition (acidic residues); it reads DDDEEEEDDDDDDDEDDDNE. Serine 369 carries the phosphoserine; by RPS6KB1 modification. Polar residues predominate over residues 414-424; the sequence is NSVCSDTSESS. A Phosphoserine modification is found at serine 439.

Belongs to the RNA polymerase II subunit 5-mediating protein family. As to quaternary structure, homodimer. Component of the PAQosome complex which is responsible for the biogenesis of several protein complexes and which consists of R2TP complex members RUVBL1, RUVBL2, RPAP3 and PIH1D1, URI complex members PFDN2, PFDN6, PDRG1, UXT and URI1 as well as ASDURF, POLR2E and DNAAF10/WDR92. Interacts with POLR2E/RPB5, RUVBL2 and RUVBL1. Interacts with PFDN2, PFDN4 and STAP1; the interactions are phosphorylation-dependent and occur in a growth-dependent manner in the mitochondrion. Interacts with UXT. Interacts with PPP1CC; the interaction is phosphorylation-dependent and occurs in a growth factor-dependent manner. Interacts (via the middle C-terminal region) with GTF2F1 and GTF2F2. Interacts with DMAP1. Interacts with TSC1 and TSC2. Interacts with PRPF8 and EFTUD2 in a ZNHIT2-dependent manner. Phosphorylation occurs in response to androgen treatment in prostate cancer cells in a mTOR-dependent manner. Phosphorylated; hyperhosphorylated in mitochondria in a mTORC-dependent signaling pathway. Phosphorylated at Ser-369 by RPS6KB1 in a growth factor- and rapamycin-dependent manner. S6K1-mediated mitochondrial phosphorylation at Ser-369 disrupts the URI1-PPP1CC complex in the mitochondrion, relieves PPP1CC phosphatase inhibition activity and hence engages a negative feedback diminishing RPS6KB1 kinase activity, preventing sustained S6K1-dependent signaling. Phosphorylated. Phosphorylation occurs essentially on serine residues. Expressed in the spinal cord, ganglia, choroid plexus and olfactors epithelium of the developing brain. Expressed in skin, lung, kidney, testis and muscles (at protein level). Expressed strongly in brain and kidney. Expressed weakly in skeletal muscle, lung and liver.

It is found in the nucleus. The protein resides in the cytoplasm. Its subcellular location is the mitochondrion. It localises to the cell projection. The protein localises to the dendrite. Involved in gene transcription regulation. Acts as a transcriptional repressor in concert with the corepressor UXT to regulate androgen receptor (AR) transcription. May act as a tumor suppressor to repress AR-mediated gene transcription and to inhibit anchorage-independent growth in prostate cancer cells. Required for cell survival in ovarian cancer cells. Together with UXT, associates with chromatin to the NKX3-1 promoter region. In terms of biological role, plays a central role in maintaining S6K1 signaling and BAD phosphorylation under normal growth conditions thereby protecting cells from potential deleterious effects of sustained S6K1 signaling. The URI1-PPP1CC complex acts as a central component of a negative feedback mechanism that counteracts excessive S6K1 survival signaling to BAD in response to growth factors. Mediates inhibition of PPP1CC phosphatase activity in mitochondria. Coordinates the regulation of nutrient-sensitive gene expression availability in a mTOR-dependent manner. Seems to be a scaffolding protein able to assemble a prefoldin-like complex that contains PFDs and proteins with roles in transcription and ubiquitination. This Mus musculus (Mouse) protein is Unconventional prefoldin RPB5 interactor (Uri1).